Here is a 371-residue protein sequence, read N- to C-terminus: N-acetyldiaminopimelate deacetylase (371 aa).

Aspartate 68 is an active-site residue. Glutamate 127 functions as the Proton acceptor in the catalytic mechanism.

The protein belongs to the peptidase M20A family. N-acetyldiaminopimelate deacetylase subfamily.

The enzyme catalyses N-acetyl-(2S,6S)-2,6-diaminopimelate + H2O = (2S,6S)-2,6-diaminopimelate + acetate. Its pathway is amino-acid biosynthesis; L-lysine biosynthesis via DAP pathway; LL-2,6-diaminopimelate from (S)-tetrahydrodipicolinate (acetylase route): step 3/3. In terms of biological role, catalyzes the conversion of N-acetyl-diaminopimelate to diaminopimelate and acetate. The protein is N-acetyldiaminopimelate deacetylase of Listeria welshimeri serovar 6b (strain ATCC 35897 / DSM 20650 / CCUG 15529 / CIP 8149 / NCTC 11857 / SLCC 5334 / V8).